The primary structure comprises 328 residues: Lytic polysaccharide monooxygenase aasB (328 aa).

Positions 1–18 are cleaved as a signal peptide; the sequence is MKAFFAISASTLLATVHG. Histidine 19 serves as a coordination point for Cu(2+). The cysteines at positions 40 and 43 are disulfide-linked. N-linked (GlcNAc...) asparagine glycosylation occurs at asparagine 54. 6 disulfide bridges follow: cysteine 66/cysteine 245, cysteine 102/cysteine 203, cysteine 118/cysteine 145, cysteine 153/cysteine 161, cysteine 167/cysteine 173, and cysteine 181/cysteine 192. Histidine 109 contributes to the Cu(2+) binding site. Tyrosine 242 lines the Cu(2+) pocket. Asparagine 306 is a glycosylation site (N-linked (GlcNAc...) asparagine).

This sequence belongs to the polysaccharide monooxygenase AA13 family. Cu(2+) serves as cofactor.

The protein localises to the secreted. The catalysed reaction is starch + reduced acceptor + O2 = D-glucono-1,5-lactone-terminated malto-oligosaccharides + short-chain malto-oligosaccharides + acceptor + H2O.. Functionally, lytic polysaccharide monooxygenase involved in breakdown of granular resistant starch. In Emericella nidulans (strain FGSC A4 / ATCC 38163 / CBS 112.46 / NRRL 194 / M139) (Aspergillus nidulans), this protein is Lytic polysaccharide monooxygenase aasB.